The primary structure comprises 343 residues: Protein RecA (343 aa).

Position 66–73 (66–73) interacts with ATP; sequence GPESSGKT. The disordered stretch occupies residues 319–343; it reads IERQIREKHLPKRSAKADEAESAEA.

Belongs to the RecA family.

The protein resides in the cytoplasm. In terms of biological role, can catalyze the hydrolysis of ATP in the presence of single-stranded DNA, the ATP-dependent uptake of single-stranded DNA by duplex DNA, and the ATP-dependent hybridization of homologous single-stranded DNAs. It interacts with LexA causing its activation and leading to its autocatalytic cleavage. The chain is Protein RecA from Thioalkalivibrio sulfidiphilus (strain HL-EbGR7).